The chain runs to 140 residues: Small ribosomal subunit protein uS12m (140 aa).

Belongs to the universal ribosomal protein uS12 family.

The protein localises to the mitochondrion. The protein is Small ribosomal subunit protein uS12m (mrps12) of Dictyostelium discoideum (Social amoeba).